A 358-amino-acid chain; its full sequence is Tripartite motif-containing protein 54 (358 aa).

The segment at 26–82 (CPICLEMFSKPVVILPCQHNLCRKCANDVFQASNPLWQSRGSTTVSSGGRFRCPSCR) adopts an RING-type zinc-finger fold. The B box-type zinc-finger motif lies at 121–163 (EQHLMCEEHEEEKINIYCLSCEVPTCSLCKVFGAHKDCEVAPL). Cys126, His129, Cys149, and His155 together coordinate Zn(2+). The tract at residues 168 to 211 (KRQKSELSDGIAMLVAGNDRVQAVITQMEEVCQTIEDNSRRQKQ) is mediates microtubule-binding and homooligomerization. A coiled-coil region spans residues 220 to 258 (LCAVLEERKGELLQALAREQEEKLQRVRGLIRQYGDHLE). The COS domain maps to 271–329 (MEEPQMALYLQQAKELINKVGAMSKVELAGRPEPGYESMEQFTVRVEHVAEMLRTIDFQ). A disordered region spans residues 326–358 (IDFQPGASGEEEEVAPDGEEGSAGPEEERPDGP). Positions 334–345 (GEEEEVAPDGEE) are enriched in acidic residues.

Homooligomer and heterooligomer. Interacts with tubulin. Interacts with TRIM63 and probably with TRIM55. In terms of tissue distribution, specifically expressed in heart and skeletal muscle.

It is found in the cytoplasm. Its subcellular location is the cytoskeleton. It localises to the myofibril. The protein localises to the sarcomere. The protein resides in the z line. Functionally, may bind and stabilize microtubules during myotubes formation. The protein is Tripartite motif-containing protein 54 (TRIM54) of Homo sapiens (Human).